We begin with the raw amino-acid sequence, 257 residues long: Pyrroline-5-carboxylate reductase (257 aa).

Belongs to the pyrroline-5-carboxylate reductase family.

The protein resides in the cytoplasm. The enzyme catalyses L-proline + NADP(+) = (S)-1-pyrroline-5-carboxylate + NADPH + 2 H(+). It catalyses the reaction L-proline + NAD(+) = (S)-1-pyrroline-5-carboxylate + NADH + 2 H(+). It participates in amino-acid biosynthesis; L-proline biosynthesis; L-proline from L-glutamate 5-semialdehyde: step 1/1. Catalyzes the reduction of 1-pyrroline-5-carboxylate (PCA) to L-proline. In Helicobacter pylori (strain ATCC 700392 / 26695) (Campylobacter pylori), this protein is Pyrroline-5-carboxylate reductase.